The primary structure comprises 444 residues: Trigger factor (444 aa).

Residues 165-250 (GDFAKFDFEG…LHEIQELKIP (86 aa)) enclose the PPIase FKBP-type domain.

This sequence belongs to the FKBP-type PPIase family. Tig subfamily.

The protein resides in the cytoplasm. The enzyme catalyses [protein]-peptidylproline (omega=180) = [protein]-peptidylproline (omega=0). Involved in protein export. Acts as a chaperone by maintaining the newly synthesized protein in an open conformation. Functions as a peptidyl-prolyl cis-trans isomerase. The protein is Trigger factor of Campylobacter jejuni subsp. jejuni serotype O:23/36 (strain 81-176).